A 69-amino-acid chain; its full sequence is Ferredoxin-1 (69 aa).

[3Fe-4S] cluster is bound by residues cysteine 12, cysteine 18, and cysteine 57.

Requires [3Fe-4S] cluster as cofactor.

Its function is as follows. Electron transport protein for the cytochrome P-450-SU1 system. The chain is Ferredoxin-1 (suaB) from Streptomyces griseolus.